The following is a 472-amino-acid chain: H(+)/Cl(-) exchange transporter ClcA (472 aa).

Topologically, residues 1–32 are cytoplasmic; the sequence is MKAETPSFEAHQFVRVRRGDAVRRLIQRDKTP. Residues 33–69 form a helical membrane-spanning segment; the sequence is LAVLLMAAVVGTLAGLVGVAFEKSVNWVQNQRIGALA. Over 70-76 the chain is Periplasmic; the sequence is QVADHWY. The chain crosses the membrane as a helical span at residues 77–100; it reads LVWPLAFILSALLAMVGYFLVRRF. The short motif at 106–110 is the Selectivity filter part_1 element; it reads GSGIP. Ser-107 contacts chloride. An intramembrane region (helical) is located at residues 109 to 116; that stretch reads IPEIEGAL. At 117–123 the chain is on the cytoplasmic side; sequence EELRPVR. The next 2 helical transmembrane spans lie at 124 to 141 and 148 to 166; these read WWRV…TLGA and EGPM…LDIF. The Selectivity filter part_2 motif lies at 146-150; sequence GREGP. Residues 167 to 176 are Cytoplasmic-facing; the sequence is RMRSPEARHT. 2 consecutive intramembrane regions (helical) follow at residues 177–189 and 193–201; these read LLAT…LSAA and PLAGILFII. Over 202–214 the chain is Cytoplasmic; that stretch reads EEMRPQFRYNLIS. The chain crosses the membrane as a helical span at residues 215–232; it reads IKAVFTGVIMSSIVFRIF. Over 233–252 the chain is Periplasmic; it reads NGEAAIIEVGKLSNAPVNTL. A helical transmembrane segment spans residues 253-281; that stretch reads WLYLVLGMLFGCFGPLFNFLVLRTQDIFQ. Topologically, residues 282–287 are cytoplasmic; the sequence is RIHGGN. Residues 288–309 form a helical membrane-spanning segment; sequence IKTWVLMGGVIGGICGLLGLMQ. Residues 310–329 are Periplasmic-facing; it reads PSAVGGGFNLIPIAAAGNFS. 2 consecutive transmembrane segments (helical) span residues 330-349 and 355-376; these read VGLL…ICFS and GIFA…MAAI. Residues 355 to 359 carry the Selectivity filter part_3 motif; that stretch reads GIFAP. Ile-356 and Phe-357 together coordinate chloride. At 377-386 the chain is on the periplasmic side; the sequence is PLFPAYHLDA. The helical intramembrane region spans 387-401; the sequence is GTFAIAGMGALLAAS. An intramembrane region (note=Loop between two helices) is located at residues 402 to 404; sequence VRA. Positions 405-416 form an intramembrane region, helical; sequence PLTGIVLVLEMT. Positions 417–421 form an intramembrane region, note=Loop between two helices; the sequence is DNYQL. Residues 422–438 form a helical membrane-spanning segment; sequence ILPMIITCLGATLLAQF. At 439–472 the chain is on the cytoplasmic side; the sequence is LGGKPLYSTILQRTLAKQEAEQAAKAQQAPRENT. Tyr-445 is a chloride binding site.

Belongs to the chloride channel (TC 2.A.49) family. ClcA subfamily. In terms of assembly, homodimer.

It is found in the cell inner membrane. It catalyses the reaction 2 chloride(in) + H(+)(out) = 2 chloride(out) + H(+)(in). Functionally, proton-coupled chloride transporter. Functions as antiport system and exchanges two chloride ions for 1 proton. Probably acts as an electrical shunt for an outwardly-directed proton pump that is linked to amino acid decarboxylation, as part of the extreme acid resistance (XAR) response. The chain is H(+)/Cl(-) exchange transporter ClcA from Klebsiella pneumoniae (strain 342).